The following is a 446-amino-acid chain: D(1A) dopamine receptor (446 aa).

Residues 1–22 (MAPNTSTMDETGLPVERDFSFR) are Extracellular-facing. N-linked (GlcNAc...) asparagine glycosylation is present at asparagine 4. Residues 23–48 (ILTACFLSLLILSTLLGNTLVCAAVI) form a helical membrane-spanning segment. The Cytoplasmic portion of the chain corresponds to 49–59 (RFRHLRSKVTN). The helical transmembrane segment at 60–86 (FFVISLAVSDLLVAVLVMPWKAVAEIA) threads the bilayer. The Extracellular portion of the chain corresponds to 87–95 (GFWPFGSFC). Cysteine 95 and cysteine 186 are joined by a disulfide. The chain crosses the membrane as a helical span at residues 96 to 118 (NIWVAFDIMCSTASILNLCVISV). The Cytoplasmic segment spans residues 119 to 137 (DRYWAISSPFQYERKMTPK). The chain crosses the membrane as a helical span at residues 138-162 (AAFILISVAWTLSVLISFIPVQLSW). Over 163–192 (HKAKPTWPLDGNFTSLEDAEDDNCDTRLSR) the chain is Extracellular. The chain crosses the membrane as a helical span at residues 193 to 218 (TYAISSSLISFYIPVAIMIVTYTSIY). Topologically, residues 219–272 (RIAQKQIRRISALERAAVHAKNCQTTTGNGNPVECSQSESSFKMSFKRETKVLK) are cytoplasmic. Residues 273-299 (TLSVIMGVFVCCWLPFFISNCMVPFCG) form a helical membrane-spanning segment. Topologically, residues 300–312 (SEETQPFCIDSIT) are extracellular. Residues 313–337 (FDVFVWFGWANSSLNPIIYAFNADF) traverse the membrane as a helical segment. At 338 to 446 (QKAFSTLLGC…PVTHSGQHST (109 aa)) the chain is on the cytoplasmic side. 2 S-palmitoyl cysteine lipidation sites follow: cysteine 347 and cysteine 351. Serine 441 carries the phosphoserine modification.

This sequence belongs to the G-protein coupled receptor 1 family. In terms of assembly, interacts with DNAJC14 via its C-terminus. Interacts with DRD2. Interacts with DORIP1.

The protein localises to the cell membrane. The protein resides in the endoplasmic reticulum membrane. It is found in the cell projection. Its subcellular location is the cilium membrane. It localises to the dendrite. The protein localises to the dendritic spine. Dopamine receptor whose activity is mediated by G proteins which activate adenylyl cyclase. This Mus musculus (Mouse) protein is D(1A) dopamine receptor (Drd1).